We begin with the raw amino-acid sequence, 668 residues long: Golgin candidate 2 (668 aa).

Residues 22–317 (QAADSLRKDE…RQREERRRRR (296 aa)) are disordered. Residues 26 to 39 (SLRKDEKSETHDEV) are compositionally biased toward basic and acidic residues. 2 stretches are compositionally biased toward polar residues: residues 64–86 (GSDS…LSSS) and 100–113 (SAPS…NTKL). 2 stretches are compositionally biased toward low complexity: residues 123 to 141 (STPN…GGTS) and 168 to 178 (SSSSNVVNSRG). Basic and acidic residues-rich tracts occupy residues 184–207 (TNKE…RNAP), 215–237 (THKE…RRSA), and 250–259 (GKRDGRESRR). Acidic residues predominate over residues 290 to 302 (DESESDYESDSST). Basic and acidic residues predominate over residues 303–312 (DSERERQREE). Residues 331–539 (AVIKERENMV…SQVEALSSEK (209 aa)) adopt a coiled-coil conformation. The next 2 membrane-spanning stretches (helical) occupy residues 594-614 (KHLG…TVFL) and 622-642 (IWAV…LLSH).

Its subcellular location is the golgi apparatus membrane. Its function is as follows. Golgi matrix protein playing a role in tethering of vesicles to Golgi membranes and in maintaining the overall structure of the Golgi apparatus. This chain is Golgin candidate 2 (GC2), found in Arabidopsis thaliana (Mouse-ear cress).